A 312-amino-acid polypeptide reads, in one-letter code: Heme oxygenase 2 (312 aa).

S2 carries the post-translational modification N-acetylserine. The residue at position 2 (S2) is a Phosphoserine. H41 contributes to the heme b binding site. 2 HRM repeats span residues 260 to 265 (KCPYYA) and 277 to 282 (SCPFRA). Residues C261 and C278 each carry the S-nitrosocysteine modification.

It belongs to the heme oxygenase family. S-nitrosylated by BLVRB.

It localises to the microsome. The protein resides in the endoplasmic reticulum. It catalyses the reaction heme b + 3 reduced [NADPH--hemoprotein reductase] + 3 O2 = biliverdin IXalpha + CO + Fe(2+) + 3 oxidized [NADPH--hemoprotein reductase] + 3 H2O + H(+). Its function is as follows. Heme oxygenase cleaves the heme ring at the alpha methene bridge to form biliverdin. Biliverdin is subsequently converted to bilirubin by biliverdin reductase. Under physiological conditions, the activity of heme oxygenase is highest in the spleen, where senescent erythrocytes are sequestrated and destroyed. Heme oxygenase 2 could be implicated in the production of carbon monoxide in brain where it could act as a neurotransmitter. This chain is Heme oxygenase 2 (HMOX2), found in Oryctolagus cuniculus (Rabbit).